The chain runs to 68 residues: Protein SlyX homolog (68 aa).

The protein belongs to the SlyX family.

The chain is Protein SlyX homolog from Pseudomonas putida (strain GB-1).